The following is a 179-amino-acid chain: Large ribosomal subunit protein uL10 (179 aa).

This sequence belongs to the universal ribosomal protein uL10 family. In terms of assembly, part of the ribosomal stalk of the 50S ribosomal subunit. The N-terminus interacts with L11 and the large rRNA to form the base of the stalk. The C-terminus forms an elongated spine to which L12 dimers bind in a sequential fashion forming a multimeric L10(L12)X complex.

In terms of biological role, forms part of the ribosomal stalk, playing a central role in the interaction of the ribosome with GTP-bound translation factors. This Kosmotoga olearia (strain ATCC BAA-1733 / DSM 21960 / TBF 19.5.1) protein is Large ribosomal subunit protein uL10.